The sequence spans 268 residues: Undecaprenyl-diphosphatase 1 (268 aa).

Transmembrane regions (helical) follow at residues 5 to 25, 43 to 63, 84 to 104, 107 to 127, 184 to 204, 218 to 238, and 247 to 267; these read SIISALLLGIIEGLTEFIPVS, GNTFAVLIQLGAILAILLVYF, LAVLVAFLPAAVIGALAHDFI, VLFETPMLICVVLIIGGFILL, AAEFSFFLAMPTMLGAFVLDL, LIAVGFVAAFVSGLFVVRSLL, and APFAWWRIVIGALGLVALLVI.

The protein belongs to the UppP family.

The protein localises to the cell inner membrane. The catalysed reaction is di-trans,octa-cis-undecaprenyl diphosphate + H2O = di-trans,octa-cis-undecaprenyl phosphate + phosphate + H(+). Catalyzes the dephosphorylation of undecaprenyl diphosphate (UPP). Confers resistance to bacitracin. This chain is Undecaprenyl-diphosphatase 1, found in Agrobacterium fabrum (strain C58 / ATCC 33970) (Agrobacterium tumefaciens (strain C58)).